The primary structure comprises 635 residues: Threonine--tRNA ligase (635 aa).

The 61-residue stretch at 1-61 (MINISFPDGS…DNDCKLRILT (61 aa)) folds into the TGS domain. A catalytic region spans residues 242–533 (DHRKLGRELD…LIEEYAGRFP (292 aa)). Zn(2+) contacts are provided by Cys-333, His-384, and His-510.

Belongs to the class-II aminoacyl-tRNA synthetase family. In terms of assembly, homodimer. Zn(2+) serves as cofactor.

The protein localises to the cytoplasm. The catalysed reaction is tRNA(Thr) + L-threonine + ATP = L-threonyl-tRNA(Thr) + AMP + diphosphate + H(+). Catalyzes the attachment of threonine to tRNA(Thr) in a two-step reaction: L-threonine is first activated by ATP to form Thr-AMP and then transferred to the acceptor end of tRNA(Thr). Also edits incorrectly charged L-seryl-tRNA(Thr). This is Threonine--tRNA ligase from Rickettsia peacockii (strain Rustic).